The sequence spans 80 residues: Exodeoxyribonuclease 7 small subunit (80 aa).

This sequence belongs to the XseB family. As to quaternary structure, heterooligomer composed of large and small subunits.

The protein localises to the cytoplasm. It catalyses the reaction Exonucleolytic cleavage in either 5'- to 3'- or 3'- to 5'-direction to yield nucleoside 5'-phosphates.. Bidirectionally degrades single-stranded DNA into large acid-insoluble oligonucleotides, which are then degraded further into small acid-soluble oligonucleotides. The sequence is that of Exodeoxyribonuclease 7 small subunit from Citrobacter koseri (strain ATCC BAA-895 / CDC 4225-83 / SGSC4696).